Reading from the N-terminus, the 207-residue chain is MARYIGPKAKLSRREGTDLFLKSARRSLADKCKLDSKPGQHGRTSGARTSDYGTQLREKQKVKRIYGVLERQFRRYFAEADRRKGNTGENLLQLLESRLDNVVYRMGFGSTRAEARQLVSHKSITVNGVVANVPSQQVKAGDVVAIREKAKKQARIVEALSLAEQGGMPSWVAVDAKKFEGTFKQMPERADIAGDINESLIVELYSR.

A disordered region spans residues 31–55; sequence KCKLDSKPGQHGRTSGARTSDYGTQ. The span at 42–53 shows a compositional bias: polar residues; the sequence is GRTSGARTSDYG. The S4 RNA-binding domain occupies 97–160; it reads SRLDNVVYRM…KKQARIVEAL (64 aa).

The protein belongs to the universal ribosomal protein uS4 family. In terms of assembly, part of the 30S ribosomal subunit. Contacts protein S5. The interaction surface between S4 and S5 is involved in control of translational fidelity.

Functionally, one of the primary rRNA binding proteins, it binds directly to 16S rRNA where it nucleates assembly of the body of the 30S subunit. Its function is as follows. With S5 and S12 plays an important role in translational accuracy. In Burkholderia ambifaria (strain MC40-6), this protein is Small ribosomal subunit protein uS4.